Consider the following 437-residue polypeptide: Adenylosuccinate lyase (437 aa).

Residues 4-5 (RY), 70-72 (KHD), and 96-97 (TS) contribute to the N(6)-(1,2-dicarboxyethyl)-AMP site. His144 serves as the catalytic Proton donor/acceptor. Residue Gln215 participates in N(6)-(1,2-dicarboxyethyl)-AMP binding. Ser265 functions as the Proton donor/acceptor in the catalytic mechanism. N(6)-(1,2-dicarboxyethyl)-AMP-binding positions include Ser266, 271–273 (KKN), and 310–314 (SVERV).

It belongs to the lyase 1 family. Adenylosuccinate lyase subfamily. Homooligomer. Residues from neighboring subunits contribute catalytic and substrate-binding residues to each active site.

The catalysed reaction is N(6)-(1,2-dicarboxyethyl)-AMP = fumarate + AMP. The enzyme catalyses (2S)-2-[5-amino-1-(5-phospho-beta-D-ribosyl)imidazole-4-carboxamido]succinate = 5-amino-1-(5-phospho-beta-D-ribosyl)imidazole-4-carboxamide + fumarate. Its pathway is purine metabolism; AMP biosynthesis via de novo pathway; AMP from IMP: step 2/2. It functions in the pathway purine metabolism; IMP biosynthesis via de novo pathway; 5-amino-1-(5-phospho-D-ribosyl)imidazole-4-carboxamide from 5-amino-1-(5-phospho-D-ribosyl)imidazole-4-carboxylate: step 2/2. Functionally, catalyzes two reactions in de novo purine nucleotide biosynthesis. Catalyzes the breakdown of 5-aminoimidazole- (N-succinylocarboxamide) ribotide (SAICAR or 2-[5-amino-1-(5-phospho-beta-D-ribosyl)imidazole-4-carboxamido]succinate) to 5-aminoimidazole-4-carboxamide ribotide (AICAR or 5-amino-1-(5-phospho-beta-D-ribosyl)imidazole-4-carboxamide) and fumarate, and of adenylosuccinate (ADS or N(6)-(1,2-dicarboxyethyl)-AMP) to adenosine monophosphate (AMP) and fumarate. The sequence is that of Adenylosuccinate lyase (purB) from Aquifex aeolicus (strain VF5).